Reading from the N-terminus, the 568-residue chain is Phosphoprotein (568 aa).

Positions 1–24 are disordered; it reads MDQDAFFFERDPEAEGEAPRKQES. Over residues 7–23 the composition is skewed to basic and acidic residues; sequence FFERDPEAEGEAPRKQE. Residues 33–41 form an N0 binding region; sequence DVVLSYKPT. A disordered region spans residues 45 to 324; it reads EDRSWLHGII…ANEEETSNTS (280 aa). Positions 58–105 are enriched in basic and acidic residues; it reads EENKPSCKADDNNKDRAISTPTQDHRSGEESGISRRTSESKTETHARL. The span at 107–121 shows a compositional bias: polar residues; sequence DQQSIHRASRRGTSP. Composition is skewed to basic and acidic residues over residues 132-144 and 151-167; these read RNTR…PNER and LTDE…KREE. Residues 190–208 show a composition bias toward polar residues; the sequence is RTNNNGRSMETSSTHSTRI. A compositionally biased stretch (basic and acidic residues) spans 239-253; sequence TRSERTQNSELHKST. Positions 294 to 305 are enriched in polar residues; sequence YTMNNANNNTKS. Positions 344-411 are multimerization; it reads FELSRSASHV…SSRDLHKRFS (68 aa). Positions 387–416 form a coiled coil; it reads EENRTLLKQIQEEINSSRDLHKRFSEYQKE. The tract at residues 412-445 is l protein binding; sequence EYQKEQNSLMMANLSTLHIITDRGGKTGDPSDTT. Residues 434-455 form a disordered region; the sequence is RGGKTGDPSDTTRSPSVFTKGK. The segment covering 441-450 has biased composition (polar residues); it reads PSDTTRSPSV. An interaction with the nucleocapsid (N-RNA) region spans residues 479 to 568; the sequence is DLIREDELRD…FEEDIDSLTN (90 aa).

Belongs to the respirovirus P protein family. In terms of assembly, homotetramer. Interacts (via multimerization domain) with polymerase L; this interaction forms the polymerase complex. Interacts (via N-terminus) with N0; this interaction allows P to chaperon N0 before encapsidation and form the N-P complex. Interacts (via C-terminus) with N-RNA template; this interaction positions the polymerase on the template.

Its function is as follows. Essential cofactor of the RNA polymerase L that plays a central role in the transcription and replication by forming the polymerase complex with RNA polymerase L and recruiting L to the genomic N-RNA template for RNA synthesis. Also plays a central role in the encapsidation of nascent RNA chains by forming the encapsidation complex with the nucleocapsid protein N (N-P complex). Acts as a chaperone for newly synthesized free N protein, so-called N0, allowing encapsidation of nascent RNA chains during replication. The nucleoprotein protein N prevents excessive phosphorylation of P, which leads to down-regulation of viral transcription/ replication. Participates, together with N, in the formation of viral factories (viroplasms), which are large inclusions in the host cytoplasm where replication takes place. Recruits host PI4KB and remodel the host endoplasmic reticulum membrane to form viral replication factories. This is Phosphoprotein (P/C) from Human parainfluenza 1 virus (strain C39) (HPIV-1).